A 69-amino-acid polypeptide reads, in one-letter code: Conotoxin reg3.6 (69 aa).

Positions 1-20 (MMSKLGVLLTICLLLFPLSA) are cleaved as a signal peptide. Positions 21–52 (LPLDGDQPADQPAERVQDISPDQNPLFHLVKR) are excised as a propeptide. 3 cysteine pairs are disulfide-bonded: Cys54/Cys68, Cys55/Cys66, and Cys60/Cys69.

This sequence belongs to the conotoxin M superfamily. Expressed by the venom duct.

Its subcellular location is the secreted. The protein is Conotoxin reg3.6 of Conus regius (Crown cone).